The sequence spans 394 residues: MTNIIRQFLRQEAAGGLILIIAAAIALLMANSALQGVYQSFLDIPVSIKIASLDISKPLLLWINDGLMAVFFLMIGLEVKRELMEGSLAGRDKAVFPAIAALGGMLAPALIYLLFNGADEVTRQGWAIPAATDIAFALGVMALLGNRVPTGLKVFLLALAIIDDLGVIIIIALFYTQQVSLQSLGIAAAAIALLAYMNWRGVGKTSAYLLVGLVLWVCILKSGVHATLAGVIVGFMIPLHTQDQRSPSESLEHGLHPWVAYLILPLFAFANAGVSLQGVSLSGLTSLLPMGIATGLFIGKPLGIFTFSWLAVKLGIAKLPDAINFKQIFAVSVLCGIGFTMSIFIASLAFEGTDIALTTYSKLGILLGSTTAAVVGYSLLRLVLPARRKAVNVR.

11 helical membrane passes run 14–34 (AGGLILIIAAAIALLMANSAL), 59–79 (LLLWINDGLMAVFFLMIGLEV), 95–115 (VFPAIAALGGMLAPALIYLLF), 125–145 (GWAIPAATDIAFALGVMALLG), 154–174 (VFLLALAIIDDLGVIIIIALF), 179–199 (VSLQSLGIAAAAIALLAYMNW), 213–233 (LVLWVCILKSGVHATLAGVIV), 254–274 (GLHPWVAYLILPLFAFANAGV), 292–312 (IATGLFIGKPLGIFTFSWLAV), 328–348 (IFAVSVLCGIGFTMSIFIASL), and 363–383 (LGILLGSTTAAVVGYSLLRLV).

The protein belongs to the NhaA Na(+)/H(+) (TC 2.A.33) antiporter family.

It localises to the cell inner membrane. The enzyme catalyses Na(+)(in) + 2 H(+)(out) = Na(+)(out) + 2 H(+)(in). In terms of biological role, na(+)/H(+) antiporter that extrudes sodium in exchange for external protons. The polypeptide is Na(+)/H(+) antiporter NhaA (Yersinia pestis bv. Antiqua (strain Antiqua)).